We begin with the raw amino-acid sequence, 251 residues long: Probable transcriptional regulatory protein Mflv_3828 (251 aa).

This sequence belongs to the TACO1 family.

It localises to the cytoplasm. In Mycolicibacterium gilvum (strain PYR-GCK) (Mycobacterium gilvum (strain PYR-GCK)), this protein is Probable transcriptional regulatory protein Mflv_3828.